Consider the following 499-residue polypeptide: Pyruvate kinase (499 aa).

Arginine 50 contributes to the substrate binding site. K(+) contacts are provided by asparagine 52, serine 54, aspartate 84, and threonine 85. ATP is bound at residue 52–55 (NFSH). ATP is bound at residue arginine 91. Glutamate 241 contributes to the Mg(2+) binding site. Substrate contacts are provided by glycine 264, aspartate 265, and threonine 297. Aspartate 265 lines the Mg(2+) pocket.

This sequence belongs to the pyruvate kinase family. As to quaternary structure, homotetramer. It depends on Mg(2+) as a cofactor. K(+) serves as cofactor.

The catalysed reaction is pyruvate + ATP = phosphoenolpyruvate + ADP + H(+). Its pathway is carbohydrate degradation; glycolysis; pyruvate from D-glyceraldehyde 3-phosphate: step 5/5. Activated by fructose 2,6-bisphosphate, activated by the effector in a non cooperative manner. The polypeptide is Pyruvate kinase (PYK) (Leishmania mexicana).